We begin with the raw amino-acid sequence, 140 residues long: UPF0251 protein Athe_2281 (140 aa).

This sequence belongs to the UPF0251 family.

The sequence is that of UPF0251 protein Athe_2281 from Caldicellulosiruptor bescii (strain ATCC BAA-1888 / DSM 6725 / KCTC 15123 / Z-1320) (Anaerocellum thermophilum).